The following is a 227-amino-acid chain: Cytochrome c oxidase subunit 2 (227 aa).

Residues 1 to 14 (MAYPFQLGLQDATS) are Mitochondrial intermembrane-facing. The helical transmembrane segment at 15 to 45 (PIMEELLHFHDHTLMIVFLISSLVLYIISSM) threads the bilayer. The Mitochondrial matrix portion of the chain corresponds to 46–59 (LTTKLTHTSTMDAQ). Residues 60–87 (EVETVWTILPAIILVLIALPSLRILYMM) traverse the membrane as a helical segment. The Mitochondrial intermembrane segment spans residues 88 to 227 (DEINNPSLTV…YFETWSALML (140 aa)). Positions 161, 196, 198, 200, 204, and 207 each coordinate Cu cation. Glu-198 serves as a coordination point for Mg(2+). Tyr-218 carries the phosphotyrosine modification.

The protein belongs to the cytochrome c oxidase subunit 2 family. In terms of assembly, component of the cytochrome c oxidase (complex IV, CIV), a multisubunit enzyme composed of 14 subunits. The complex is composed of a catalytic core of 3 subunits MT-CO1, MT-CO2 and MT-CO3, encoded in the mitochondrial DNA, and 11 supernumerary subunits COX4I, COX5A, COX5B, COX6A, COX6B, COX6C, COX7A, COX7B, COX7C, COX8 and NDUFA4, which are encoded in the nuclear genome. The complex exists as a monomer or a dimer and forms supercomplexes (SCs) in the inner mitochondrial membrane with NADH-ubiquinone oxidoreductase (complex I, CI) and ubiquinol-cytochrome c oxidoreductase (cytochrome b-c1 complex, complex III, CIII), resulting in different assemblies (supercomplex SCI(1)III(2)IV(1) and megacomplex MCI(2)III(2)IV(2)). Found in a complex with TMEM177, COA6, COX18, COX20, SCO1 and SCO2. Interacts with TMEM177 in a COX20-dependent manner. Interacts with COX20. Interacts with COX16. Cu cation is required as a cofactor.

It localises to the mitochondrion inner membrane. The catalysed reaction is 4 Fe(II)-[cytochrome c] + O2 + 8 H(+)(in) = 4 Fe(III)-[cytochrome c] + 2 H2O + 4 H(+)(out). Functionally, component of the cytochrome c oxidase, the last enzyme in the mitochondrial electron transport chain which drives oxidative phosphorylation. The respiratory chain contains 3 multisubunit complexes succinate dehydrogenase (complex II, CII), ubiquinol-cytochrome c oxidoreductase (cytochrome b-c1 complex, complex III, CIII) and cytochrome c oxidase (complex IV, CIV), that cooperate to transfer electrons derived from NADH and succinate to molecular oxygen, creating an electrochemical gradient over the inner membrane that drives transmembrane transport and the ATP synthase. Cytochrome c oxidase is the component of the respiratory chain that catalyzes the reduction of oxygen to water. Electrons originating from reduced cytochrome c in the intermembrane space (IMS) are transferred via the dinuclear copper A center (CU(A)) of subunit 2 and heme A of subunit 1 to the active site in subunit 1, a binuclear center (BNC) formed by heme A3 and copper B (CU(B)). The BNC reduces molecular oxygen to 2 water molecules using 4 electrons from cytochrome c in the IMS and 4 protons from the mitochondrial matrix. In Speothos venaticus (Bush dog), this protein is Cytochrome c oxidase subunit 2 (MT-CO2).